A 381-amino-acid chain; its full sequence is Subtilisin NAT (381 aa).

Residues 1–29 (MRSKKLWISLLFALTLIFTMAFSNMSAQA) form the signal peptide. Positions 30–106 (AGKSSTEKKY…VEEDHIAHEY (77 aa)) are excised as a propeptide. In terms of domain architecture, Inhibitor I9 spans 38-103 (KYIVGFKQTM…VAYVEEDHIA (66 aa)). The Peptidase S8 domain maps to 111 to 380 (PYGISQIKAP…KGLINVQAAA (270 aa)). Asp138 serves as the catalytic Charge relay system. Asp147 lines the Ca(2+) pocket. The active-site Charge relay system is His170. Leu181, Asn183, Ile185, Val187, Ala275, Tyr277, Thr280, and Asp303 together coordinate Ca(2+). Ser327 (charge relay system) is an active-site residue.

Belongs to the peptidase S8 family. In terms of assembly, monomer. Ca(2+) is required as a cofactor.

The protein localises to the secreted. It catalyses the reaction Hydrolysis of proteins with broad specificity for peptide bonds, and a preference for a large uncharged residue in P1. Hydrolyzes peptide amides.. With respect to regulation, inhibited by PMSF (phenylmethylsulfonyl fluoride). Its function is as follows. Subtilisin is an extracellular alkaline serine protease, it catalyzes the hydrolysis of proteins and peptide amides. Subtilisin NAT also has fibrinolytic activity. The chain is Subtilisin NAT from Bacillus subtilis subsp. natto.